A 391-amino-acid polypeptide reads, in one-letter code: Yellow-related salivary protein ASP4 (391 aa).

Positions 1–18 are cleaved as a signal peptide; sequence MKIFLCIIAVVSLQGVVA. Residue N29 is glycosylated (N-linked (GlcNAc...) asparagine).

This sequence belongs to the major royal jelly protein family. As to expression, female salivary gland (at protein level).

The protein localises to the secreted. Functionally, probably modulates blood feeding of sand flies on vertebrate species by binding and sequestering different mediators involved in the host response. Binds biogenic amines. Binds serotonin and dopamine with high affinity. Binds adrenaline, octopamine and adrenaline with medium affinity. Binds histamine with low affinity. The sequence is that of Yellow-related salivary protein ASP4 from Phlebotomus orientalis (Phlebotomine sand fly).